The sequence spans 270 residues: Undecaprenyl-diphosphatase 1 (270 aa).

Transmembrane regions (helical) follow at residues 5–25, 42–62, 89–109, 117–137, 192–212, 220–240, and 250–270; these read YYVL…PIPI, IEGF…VLLI, FFFI…GVLF, LKGV…LWII, FSFL…ITDI, TLFV…YISL, and GNLK…LIFL.

The protein belongs to the UppP family.

It localises to the cell membrane. The enzyme catalyses di-trans,octa-cis-undecaprenyl diphosphate + H2O = di-trans,octa-cis-undecaprenyl phosphate + phosphate + H(+). Its function is as follows. Catalyzes the dephosphorylation of undecaprenyl diphosphate (UPP). Confers resistance to bacitracin. This Bacillus cereus (strain ATCC 14579 / DSM 31 / CCUG 7414 / JCM 2152 / NBRC 15305 / NCIMB 9373 / NCTC 2599 / NRRL B-3711) protein is Undecaprenyl-diphosphatase 1.